Reading from the N-terminus, the 182-residue chain is Protein Syd (182 aa).

The protein belongs to the Syd family.

The protein localises to the cell inner membrane. Its function is as follows. Interacts with the SecY protein in vivo. May bind preferentially to an uncomplexed state of SecY, thus functioning either as a chelating agent for excess SecY in the cell or as a regulatory factor that negatively controls the translocase function. The chain is Protein Syd from Aliivibrio salmonicida (strain LFI1238) (Vibrio salmonicida (strain LFI1238)).